The following is a 396-amino-acid chain: ATP synthase subunit beta, chloroplastic (396 aa).

ATP is bound at residue 74-81 (GGAGVGKT).

The protein belongs to the ATPase alpha/beta chains family. F-type ATPases have 2 components, CF(1) - the catalytic core - and CF(0) - the membrane proton channel. CF(1) has five subunits: alpha(3), beta(3), gamma(1), delta(1), epsilon(1). CF(0) has four main subunits: a(1), b(1), b'(1) and c(9-12).

The protein resides in the plastid. It is found in the chloroplast thylakoid membrane. It catalyses the reaction ATP + H2O + 4 H(+)(in) = ADP + phosphate + 5 H(+)(out). Produces ATP from ADP in the presence of a proton gradient across the membrane. The catalytic sites are hosted primarily by the beta subunits. This is ATP synthase subunit beta, chloroplastic from Adiantum raddianum (Maidenhair fern).